A 117-amino-acid chain; its full sequence is Modulator protein MzrA (117 aa).

Over 1–9 (MNSPGLRKP) the chain is Cytoplasmic. Residues 10 to 29 (TIWRPLLLLFPLLALLLSMS) form a helical membrane-spanning segment. Over 30 to 117 (SPRLPDEVML…THGTIRVARS (88 aa)) the chain is Periplasmic.

It belongs to the MzrA family. Interacts with EnvZ.

It is found in the cell inner membrane. In terms of biological role, modulates the activity of the EnvZ/OmpR two-component regulatory system, probably by directly modulating EnvZ enzymatic activity and increasing stability of phosphorylated OmpR. This chain is Modulator protein MzrA, found in Dickeya zeae (strain Ech586) (Dickeya dadantii (strain Ech586)).